The primary structure comprises 505 residues: Metal transporter Nramp3.2 (505 aa).

Transmembrane regions (helical) follow at residues 50-70, 78-98, 127-147, 159-179, 187-207, 233-253, 280-300, 321-341, 369-389, 400-420, 439-459, and 466-486; these read LWLF…PGNL, AIAG…GLLV, MVLW…EVIG, FVPL…FLFL, LEAV…WMFA, AVGV…SALV, ALVI…KGFY, YGGG…AAGQ, ALIT…VFDT, WLNV…LCLV, AWLV…DFFF, and AFTT…IYLI.

It belongs to the NRAMP (TC 2.A.55) family. In terms of tissue distribution, expressed in roots, stems, buds and leaves.

The protein resides in the vacuole membrane. It catalyses the reaction Mn(2+)(in) = Mn(2+)(out). It carries out the reaction Fe(2+)(in) = Fe(2+)(out). In terms of biological role, divalent metal transporter. Can transport manganese (Mn) and iron (Fe). Involved in the release of metals stored in the vacuole. This is Metal transporter Nramp3.2 from Populus trichocarpa (Western balsam poplar).